Here is a 472-residue protein sequence, read N- to C-terminus: Excisase A (472 aa).

A Tyr recombinase domain is found at 244 to 429 (EILSGITKFE…FSLDMRKLAI (186 aa)). Catalysis depends on residues R287, K317, R384, and H407. Y416 functions as the O-(3'-phospho-DNA)-tyrosine intermediate in the catalytic mechanism.

The protein belongs to the XisA/XisC recombinase family.

Functionally, essential for DNA excision. Site specific recombinase necessary for the excision of the 11 kb nifD element during heterocyst differentiation. This Nostoc sp. (strain PCC 7120 / SAG 25.82 / UTEX 2576) protein is Excisase A (xisA).